A 583-amino-acid polypeptide reads, in one-letter code: Chromosomal replication initiator protein DnaA (583 aa).

The tract at residues Met-1–Met-91 is domain I, interacts with DnaA modulators. Disordered regions lie at residues Pro-86–Val-179 and Val-197–Asp-232. The segment at Met-91–Thr-235 is domain II. The span at Glu-97–Asp-106 shows a compositional bias: polar residues. Composition is skewed to basic and acidic residues over residues Glu-126–Ala-135 and Gln-147–Pro-174. The segment covering Ala-205–Val-226 has biased composition (polar residues). The interval His-236–Ala-460 is domain III, AAA+ region. Positions 280, 282, 283, and 284 each coordinate ATP. Positions Ser-461–Asp-583 are domain IV, binds dsDNA.

Belongs to the DnaA family. As to quaternary structure, oligomerizes as a right-handed, spiral filament on DNA at oriC.

The protein resides in the cytoplasm. In terms of biological role, plays an essential role in the initiation and regulation of chromosomal replication. ATP-DnaA binds to the origin of replication (oriC) to initiate formation of the DNA replication initiation complex once per cell cycle. Binds the DnaA box (a 9 base pair repeat at the origin) and separates the double-stranded (ds)DNA. Forms a right-handed helical filament on oriC DNA; dsDNA binds to the exterior of the filament while single-stranded (ss)DNA is stabiized in the filament's interior. The ATP-DnaA-oriC complex binds and stabilizes one strand of the AT-rich DNA unwinding element (DUE), permitting loading of DNA polymerase. After initiation quickly degrades to an ADP-DnaA complex that is not apt for DNA replication. Binds acidic phospholipids. The protein is Chromosomal replication initiator protein DnaA of Bifidobacterium animalis subsp. lactis (strain AD011).